The following is a 375-amino-acid chain: 2-isopropylmalate synthase (375 aa).

The 124-residue stretch at 1-124 (GRTSIDNLCR…FTNIKHNELY (124 aa)) folds into the Pyruvate carboxyltransferase domain. Residues His-59, His-61, and Asn-95 each coordinate Mn(2+). Residues 250 to 375 (QLKYFSIHSG…SKIKNIKNKK (126 aa)) are regulatory domain.

Belongs to the alpha-IPM synthase/homocitrate synthase family. LeuA type 1 subfamily. Homodimer.

Its subcellular location is the cytoplasm. The enzyme catalyses 3-methyl-2-oxobutanoate + acetyl-CoA + H2O = (2S)-2-isopropylmalate + CoA + H(+). It participates in amino-acid biosynthesis; L-leucine biosynthesis; L-leucine from 3-methyl-2-oxobutanoate: step 1/4. Functionally, catalyzes the condensation of the acetyl group of acetyl-CoA with 3-methyl-2-oxobutanoate (2-ketoisovalerate) to form 3-carboxy-3-hydroxy-4-methylpentanoate (2-isopropylmalate). This is 2-isopropylmalate synthase from Buchnera aphidicola subsp. Thelaxes suberi.